The primary structure comprises 286 residues: MAGAKEIRSKIASIKSTQKITNAMEKVAVSKMRKAQMRMAAGRPYAERIRQVIGHLANANPEYRHPFMVEREVKRVGYIVVSSDRGLCGGLNINLFKSLVKDMSGYREQGAEIDLCVIGSKGASFFRSFGGNVVAAISHLGEEPSINDLIGSVKVMLDAYLEGRIDRLFVVSNKFVNTMTQKPTVEQLIPLVADDDQELKHHWDYLYEPDAKSLLDGLLVRYVESQVYQAVVENNACEQAARMIAMKNATDNAGELISDLQLIYNKARQAAITQEISEIVGGAAAV.

This sequence belongs to the ATPase gamma chain family. As to quaternary structure, F-type ATPases have 2 components, CF(1) - the catalytic core - and CF(0) - the membrane proton channel. CF(1) has five subunits: alpha(3), beta(3), gamma(1), delta(1), epsilon(1). CF(0) has three main subunits: a, b and c.

The protein localises to the cell inner membrane. In terms of biological role, produces ATP from ADP in the presence of a proton gradient across the membrane. The gamma chain is believed to be important in regulating ATPase activity and the flow of protons through the CF(0) complex. The chain is ATP synthase gamma chain from Pseudomonas aeruginosa (strain UCBPP-PA14).